The following is a 494-amino-acid chain: Membrane-bound lytic murein transglycosylase F 1 (494 aa).

Residues 1–24 (MRIMAVRLVAGAITLALMAYAWLA) form the signal peptide. Residues 25–270 (WERARDPEPI…TLLEEHFGHL (246 aa)) are non-LT domain. The interval 271-494 (GRFDYVGFRA…APLPADPPAD (224 aa)) is LT domain. Glu-317 is a catalytic residue. Positions 464–494 (QVPAGEALGEPPLPTPPAPPGAPLPADPPAD) are disordered. The segment covering 474–494 (PPLPTPPAPPGAPLPADPPAD) has biased composition (pro residues).

In the N-terminal section; belongs to the bacterial solute-binding protein 3 family. The protein in the C-terminal section; belongs to the transglycosylase Slt family.

It is found in the cell outer membrane. It catalyses the reaction Exolytic cleavage of the (1-&gt;4)-beta-glycosidic linkage between N-acetylmuramic acid (MurNAc) and N-acetylglucosamine (GlcNAc) residues in peptidoglycan, from either the reducing or the non-reducing ends of the peptidoglycan chains, with concomitant formation of a 1,6-anhydrobond in the MurNAc residue.. In terms of biological role, murein-degrading enzyme that degrades murein glycan strands and insoluble, high-molecular weight murein sacculi, with the concomitant formation of a 1,6-anhydromuramoyl product. Lytic transglycosylases (LTs) play an integral role in the metabolism of the peptidoglycan (PG) sacculus. Their lytic action creates space within the PG sacculus to allow for its expansion as well as for the insertion of various structures such as secretion systems and flagella. The protein is Membrane-bound lytic murein transglycosylase F 1 of Alkalilimnicola ehrlichii (strain ATCC BAA-1101 / DSM 17681 / MLHE-1).